The sequence spans 177 residues: R-phycoerythrin beta chain (177 aa).

Residues cysteine 50 and cysteine 61 each coordinate phycourobilin. At asparagine 72 the chain carries N4-methylasparagine. (2R,3E)-phycoerythrobilin-binding residues include cysteine 82 and cysteine 158.

Belongs to the phycobiliprotein family. In terms of assembly, heterodimer of an alpha and a beta chain. Post-translationally, contains two covalently linked phycoerythrobilin chromophores and one covalently linked phycourobilin chromophore.

It localises to the plastid. Its subcellular location is the chloroplast thylakoid membrane. In terms of biological role, light-harvesting photosynthetic bile pigment-protein from the phycobiliprotein complex. In Pyropia yezoensis (Susabi-nori), this protein is R-phycoerythrin beta chain (cpeB).